We begin with the raw amino-acid sequence, 148 residues long: Large ribosomal subunit protein bL9 (148 aa).

This sequence belongs to the bacterial ribosomal protein bL9 family.

In terms of biological role, binds to the 23S rRNA. This Streptomyces avermitilis (strain ATCC 31267 / DSM 46492 / JCM 5070 / NBRC 14893 / NCIMB 12804 / NRRL 8165 / MA-4680) protein is Large ribosomal subunit protein bL9.